The following is a 604-amino-acid chain: Putative O-acetyltransferase SAV0974 (604 aa).

11 helical membrane-spanning segments follow: residues 15-35 (YMPG…IYHL), 43-63 (GFLG…SLLL), 85-105 (LLPA…LLKS), 150-170 (AIEE…LLTI), 176-196 (IGFI…FIYS), 212-232 (LQTL…KLKN), 240-260 (YVID…FFII), 267-287 (IYDG…ASVV), 310-330 (YSLY…YVDG), 332-352 (IPVY…ELSY), and 377-397 (FIRM…LVGA). Catalysis depends on residues Ser-459, Asp-581, and His-584.

It belongs to the acyltransferase 3 family.

The protein localises to the cell membrane. The polypeptide is Putative O-acetyltransferase SAV0974 (Staphylococcus aureus (strain Mu50 / ATCC 700699)).